Consider the following 161-residue polypeptide: Allophycocyanin subunit alpha-B (161 aa).

Asn71 is subject to N4-methylasparagine. Cys81 serves as a coordination point for (2R,3E)-phycocyanobilin.

This sequence belongs to the phycobiliprotein family. Heterodimer of an alpha-B and a beta chain forming AP-B. In terms of processing, contains one covalently linked bilin chromophore. The chromophore is added by phycocyanobilin lyase CpcUS.

The protein localises to the cellular thylakoid membrane. A variant alpha-allophycocyanin (AP) which forms a complex with beta-AP with maximum absorption at approximately 670 nanometers. It is an important phycobilisome terminal emitter involved in energy transfer to photosystem I. This is Allophycocyanin subunit alpha-B (apcD) from Picosynechococcus sp. (strain ATCC 27264 / PCC 7002 / PR-6) (Agmenellum quadruplicatum).